The primary structure comprises 438 residues: Xylose isomerase (438 aa).

Positions 306 and 308 each coordinate Mg(2+).

The protein belongs to the xylose isomerase family. As to quaternary structure, homotetramer. Mg(2+) serves as cofactor.

The protein localises to the cytoplasm. It catalyses the reaction alpha-D-xylose = alpha-D-xylulofuranose. The protein is Xylose isomerase of Caldicellulosiruptor bescii (strain ATCC BAA-1888 / DSM 6725 / KCTC 15123 / Z-1320) (Anaerocellum thermophilum).